Reading from the N-terminus, the 247-residue chain is 3-oxoacyl-[acyl-carrier-protein] reductase FabG (247 aa).

NADP(+)-binding positions include 12–15 (GASR), T37, 62–63 (DV), and N89. S141 serves as a coordination point for substrate. The Proton acceptor role is filled by Y154. NADP(+) contacts are provided by residues 154 to 158 (YAAAK) and I187.

The protein belongs to the short-chain dehydrogenases/reductases (SDR) family. In terms of assembly, homotetramer.

The catalysed reaction is a (3R)-hydroxyacyl-[ACP] + NADP(+) = a 3-oxoacyl-[ACP] + NADPH + H(+). Its pathway is lipid metabolism; fatty acid biosynthesis. Its function is as follows. Catalyzes the NADPH-dependent reduction of beta-ketoacyl-ACP substrates to beta-hydroxyacyl-ACP products, the first reductive step in the elongation cycle of fatty acid biosynthesis. The sequence is that of 3-oxoacyl-[acyl-carrier-protein] reductase FabG (fabG) from Pseudomonas aeruginosa (strain ATCC 15692 / DSM 22644 / CIP 104116 / JCM 14847 / LMG 12228 / 1C / PRS 101 / PAO1).